The sequence spans 935 residues: C-1-tetrahydrofolate synthase, cytoplasmic (935 aa).

Methionine 1 is modified (N-acetylmethionine). Positions 2–291 are methylenetetrahydrofolate dehydrogenase and methenyltetrahydrofolate cyclohydrolase (D/C) domain; it reads APAGILNGKL…MLMQSTVESA (290 aa). Substrate-binding positions include 52–56 and 99–101; these read YINVK and VQL. Lysine 56 is a catalytic residue. Residues 172 to 174 and serine 197 each bind NADP(+); that span reads GRS. Substrate is bound at residue 272–276; it reads PGGVG. The interval 310–935 is formyltetrahydrofolate synthetase domain; sequence LNLKTPVPSD…PETEQVNGLF (626 aa). Phosphoserine is present on serine 318. 380 to 387 provides a ligand contact to ATP; that stretch reads TPLGEGKS. A phosphoserine mark is found at serine 413 and serine 490.

It in the N-terminal section; belongs to the tetrahydrofolate dehydrogenase/cyclohydrolase family. The protein in the C-terminal section; belongs to the formate--tetrahydrofolate ligase family. Homodimer.

It is found in the cytoplasm. The catalysed reaction is (6R)-5,10-methylene-5,6,7,8-tetrahydrofolate + NADP(+) = (6R)-5,10-methenyltetrahydrofolate + NADPH. It carries out the reaction (6R)-5,10-methenyltetrahydrofolate + H2O = (6R)-10-formyltetrahydrofolate + H(+). The enzyme catalyses (6S)-5,6,7,8-tetrahydrofolate + formate + ATP = (6R)-10-formyltetrahydrofolate + ADP + phosphate. Its pathway is one-carbon metabolism; tetrahydrofolate interconversion. In terms of biological role, trifunctional enzyme that catalyzes the interconversion of three forms of one-carbon-substituted tetrahydrofolate: (6R)-5,10-methylene-5,6,7,8-tetrahydrofolate, 5,10-methenyltetrahydrofolate and (6S)-10-formyltetrahydrofolate. These derivatives of tetrahydrofolate are differentially required in nucleotide and amino acid biosynthesis, (6S)-10-formyltetrahydrofolate being required for purine biosynthesis while (6R)-5,10-methylene-5,6,7,8-tetrahydrofolate is used for serine and methionine biosynthesis for instance. The protein is C-1-tetrahydrofolate synthase, cytoplasmic (Mthfd1) of Mus musculus (Mouse).